A 238-amino-acid chain; its full sequence is Trypsin-3 (238 aa).

Positions 1 to 7 (FAVAFAA) are cleaved as a signal peptide. Residues 8 to 15 (PIDDEDDK) constitute a propeptide, activation peptide. The Peptidase S1 domain maps to 16–236 (IVGGYECRKN…YRSWISSTMS (221 aa)). Disulfide bonds link C22–C152, C40–C56, C124–C225, C131–C198, C163–C177, and C188–C212. The active-site Charge relay system is H55. The Ca(2+) site is built by E67, N69, V72, and E77. D99 functions as the Charge relay system in the catalytic mechanism. The Charge relay system role is filled by S192.

It belongs to the peptidase S1 family. Requires Ca(2+) as cofactor.

The protein resides in the secreted. The protein localises to the extracellular space. The enzyme catalyses Preferential cleavage: Arg-|-Xaa, Lys-|-Xaa.. This Salmo salar (Atlantic salmon) protein is Trypsin-3.